The sequence spans 111 residues: MKRNGETKRRRNVAEEAEQGEDPAMWENLDRNFRQVQSVLDRNRSLIQQVNDNHQSRMADNMSKNVALIQELNGNISKVVNMYSDLNTSFSSGFHGGKNGHDGGGAAGTRA.

Residues 1 to 26 form a disordered region; that stretch reads MKRNGETKRRRNVAEEAEQGEDPAMW. S45 carries the post-translational modification Phosphoserine. Residues 90–111 are disordered; that stretch reads FSSGFHGGKNGHDGGGAAGTRA. Positions 94-111 are enriched in gly residues; sequence FHGGKNGHDGGGAAGTRA.

The protein belongs to the EARLY FLOWERING 4 family. As to quaternary structure, homodimer. Interacts with ELF3.

The protein localises to the nucleus. In terms of biological role, component of the central CCA1/LHY-TOC1 feedback loop in the circadian clock that promotes clock accuracy and is required for sustained rhythms in the absence of daily light/dark cycles. Part of a corepressor complex consisting of ELF4, ELF3, and LUX involved in the transcriptional regulation of APRR9. Increases ELF3 nuclear distribution and localization in nuclear bodies. Required for responsiveness to continuous red, by regulating phytochrome B (phyB) signaling (including during seedling de-etiolation) and gene expression. Mediates both entrainment to an environmental cycle and circadian rhythm sustainability under constant conditions. Controls flowering time. Necessary for light-induced expression of both CCA1 and LHY. This chain is Protein EARLY FLOWERING 4 (ELF4), found in Arabidopsis thaliana (Mouse-ear cress).